Consider the following 481-residue polypeptide: Abl interactor 1 (481 aa).

Ala-2 is modified (N-acetylalanine). The segment at Ala-18–Gln-79 is required for binding to WASF1. The 63-residue stretch at Lys-45 to Arg-107 folds into the t-SNARE coiled-coil homology domain. Tyr-53 is modified (phosphotyrosine). Positions Ala-158–Gly-285 are disordered. Positions Gly-161 to Asn-175 are enriched in polar residues. Phosphothreonine is present on residues Thr-174 and Thr-178. 2 positions are modified to phosphoserine: Ser-183 and Ser-187. Residue Tyr-213 is modified to Phosphotyrosine. A Phosphothreonine modification is found at Thr-215. 3 positions are modified to phosphoserine: Ser-216, Ser-222, and Ser-225. Polar residues predominate over residues Ser-222–Arg-235. Composition is skewed to low complexity over residues Ser-248–Gly-258 and Gly-272–Ser-282. A phosphoserine mark is found at Ser-292 and Ser-296. 2 disordered regions span residues Ala-318–Gln-348 and Asn-361–Val-392. Pro residues-rich tracts occupy residues Pro-366 to Asp-376 and Ser-383 to Val-392. Residues Asn-419 to His-478 enclose the SH3 domain. Position 428 is a phosphotyrosine (Tyr-428). Residue Ser-439 is modified to Phosphoserine. Phosphothreonine is present on Thr-480.

It belongs to the ABI family. As to quaternary structure, interacts with ENAH, Abelson murine leukemia virus V-ABL, ABL1, STX1A, SNAP25, VAMP2, and through its N-terminus with WASF1. Part of a complex consisting of ABI1, STX1A and SNAP25. Part of a complex consisting of ABI1, EPS8 and SOS1. Interacts with EPS8, SOS1, SOS2, GRB2, SPTA1, and the first SH3 domain of NCK1. Component of the WAVE2 complex composed of ABI1, CYFIP1/SRA1, NCKAP1/NAP1 (NCKAP1l/HEM1 in hematopoietic cells) and WASF2/WAVE2. Interacts (via SH3 domain) with SHANK2 and SHANK3, but not SHANK1; the interaction is direct. Interacts with the heterodimer MYC:MAX; the interaction may enhance MYC:MAX transcriptional activity. Interacts with FNBP1L (via the SH3 domain), WASF2, and CDC42, but only in the presence of FNBP1L. In terms of processing, phosphorylated on tyrosine residues after serum stimulation or induction by v-Abl. Seems to be phosphorylated at Tyr-53 by ABL1, required for nuclear but not for synaptic localization. Widely expressed with highest levels in bone marrow, spleen, brain, testes, and embryonic brain. In adult brain prominently expressed in the neocortex, hippocampus and dentate gyrus.

It localises to the cytoplasm. The protein localises to the nucleus. The protein resides in the cell projection. It is found in the lamellipodium. Its subcellular location is the filopodium. It localises to the growth cone. The protein localises to the postsynaptic density. The protein resides in the cytoskeleton. Its function is as follows. May act in negative regulation of cell growth and transformation by interacting with nonreceptor tyrosine kinases ABL1 and/or ABL2. In vitro, at least isoform 2 and isoform 4 suppress the transforming activity of Abelson murine leukemia virus (v-Abl) after overexpression in fibroblasts. May play a role in regulation EGF-induced Erk pathway activation. Involved in cytoskeletal reorganization and EGFR signaling. Together with EPS8 participates in transduction of signals from Ras to Rac. In vitro, a trimeric complex of ABI1, EPS8 and SOS1 exhibits Rac specific guanine nucleotide exchange factor (GEF) activity and ABI1 seems to act as an adapter in the complex. Regulates ABL1/c-Abl-mediated phosphorylation of ENAH. Recruits WASF1 to lamellipodia and there seems to regulate WASF1 protein level. In brain, seems to regulate the dendritic outgrowth and branching as well as to determine the shape and number of synaptic contacts of developing neurons. This is Abl interactor 1 from Mus musculus (Mouse).